A 302-amino-acid polypeptide reads, in one-letter code: Probable 2-(5''-triphosphoribosyl)-3'-dephosphocoenzyme-A synthase 1 (302 aa).

It belongs to the CitG/MdcB family.

The catalysed reaction is 3'-dephospho-CoA + ATP = 2'-(5''-triphospho-alpha-D-ribosyl)-3'-dephospho-CoA + adenine. This is Probable 2-(5''-triphosphoribosyl)-3'-dephosphocoenzyme-A synthase 1 from Salmonella typhimurium (strain LT2 / SGSC1412 / ATCC 700720).